The primary structure comprises 329 residues: Chlorophyllase-1, chloroplastic (329 aa).

The transit peptide at 1–21 directs the protein to the chloroplast; it reads MAAMVDAKPAASVQGTPLLAT. Residues 145–149 carry the GXSXG motif; it reads GHSRG. Serine 147 functions as the Nucleophile in the catalytic mechanism. Residues aspartate 169 and histidine 242 each act as charge relay system in the active site.

Belongs to the AB hydrolase superfamily. Lipase family.

It is found in the plastid. The protein resides in the chloroplast. The enzyme catalyses a chlorophyll + H2O = a chlorophyllide + phytol + H(+). It functions in the pathway porphyrin-containing compound metabolism; chlorophyll degradation. Its function is as follows. Catalyzes the hydrolysis of ester bond in chlorophyll to yield chlorophyllide and phytol. The polypeptide is Chlorophyllase-1, chloroplastic (CHLASE1) (Citrus sinensis (Sweet orange)).